Consider the following 246-residue polypeptide: Probable 2-phosphosulfolactate phosphatase (246 aa).

It belongs to the ComB family. It depends on Mg(2+) as a cofactor.

The enzyme catalyses (2R)-O-phospho-3-sulfolactate + H2O = (2R)-3-sulfolactate + phosphate. This Nostoc punctiforme (strain ATCC 29133 / PCC 73102) protein is Probable 2-phosphosulfolactate phosphatase.